The following is an 86-amino-acid chain: uncharacterized protein (86 aa).

As to expression, retina-specific.

This is an uncharacterized protein from Homo sapiens (Human).